The chain runs to 192 residues: MRLSSTNMDARKMLFAAILSICALSSKKILIYNEEMIVALCFIGFIIFSRKSLGTTFKVTLDGRIQAIQEELQQFPNPNEVVLLESNEQQRLLRISLRICGTVVESLPMARCAPKCEKTVQALLCRNLNVKLATLTNAISSRRIRFQDDLVTKFYTLVGKQFAYSCISKAERVEFIRESLVVLRMVRGGGFS.

Residues 29–49 form a helical membrane-spanning segment; it reads ILIYNEEMIVALCFIGFIIFS.

It belongs to the ATPase protein MI25 family. F-type ATPases have 2 components, CF(1) - the catalytic core - and CF(0) - the membrane proton channel. CF(1) has five subunits: alpha(3), beta(3), gamma(1), delta(1), epsilon(1). CF(0) has three main subunits: a, b and c.

It is found in the mitochondrion membrane. In terms of biological role, this is one of the chains of the nonenzymatic component (CF(0) subunit) of the mitochondrial ATPase complex. The chain is ATP synthase protein MI25 (ATP4) from Arabidopsis thaliana (Mouse-ear cress).